A 518-amino-acid polypeptide reads, in one-letter code: DNA-binding protein D-ETS-4 (518 aa).

Disordered stretches follow at residues 74–113 (SQPI…QSSP) and 152–172 (LPPS…SCGE). Polar residues predominate over residues 84–94 (TAPYTNPSSHQ). The segment covering 102-113 (PHSAYPSPQSSP) has biased composition (low complexity). Residues 158–171 (ESNCETPSPRSSCG) are compositionally biased toward polar residues. One can recognise a PNT domain in the interval 258 to 344 (HAKREADAIC…AQLEIWKMAY (87 aa)). Positions 393-426 (APLNGSTTSPPATNASNGGTATVKRPNGGRTGGG) are disordered. Polar residues predominate over residues 396–412 (NGSTTSPPATNASNGGT). The ETS DNA-binding region spans 430–513 (IHLWQFLKEL…RSQRLVYQFC (84 aa)).

This sequence belongs to the ETS family. In terms of tissue distribution, transient high expression in pole cells during embryonic stages 8-11.

It is found in the nucleus. May have a role in germline development. The sequence is that of DNA-binding protein D-ETS-4 (Ets98B) from Drosophila melanogaster (Fruit fly).